Here is a 361-residue protein sequence, read N- to C-terminus: 1-deoxy-D-xylulose 5-phosphate reductoisomerase (361 aa).

Threonine 12, glycine 13, serine 14, isoleucine 15, glycine 38, and asparagine 102 together coordinate NADPH. Residue lysine 103 coordinates 1-deoxy-D-xylulose 5-phosphate. Glutamate 104 is an NADPH binding site. Aspartate 126 contributes to the Mn(2+) binding site. The 1-deoxy-D-xylulose 5-phosphate site is built by serine 127, glutamate 128, serine 152, and histidine 175. Residue glutamate 128 participates in Mn(2+) binding. Glycine 181 is a binding site for NADPH. Residues serine 188, asparagine 193, lysine 194, and glutamate 197 each coordinate 1-deoxy-D-xylulose 5-phosphate. Glutamate 197 provides a ligand contact to Mn(2+).

The protein belongs to the DXR family. The cofactor is Mg(2+). It depends on Mn(2+) as a cofactor.

It carries out the reaction 2-C-methyl-D-erythritol 4-phosphate + NADP(+) = 1-deoxy-D-xylulose 5-phosphate + NADPH + H(+). The protein operates within isoprenoid biosynthesis; isopentenyl diphosphate biosynthesis via DXP pathway; isopentenyl diphosphate from 1-deoxy-D-xylulose 5-phosphate: step 1/6. Catalyzes the NADPH-dependent rearrangement and reduction of 1-deoxy-D-xylulose-5-phosphate (DXP) to 2-C-methyl-D-erythritol 4-phosphate (MEP). The polypeptide is 1-deoxy-D-xylulose 5-phosphate reductoisomerase (Leifsonia xyli subsp. xyli (strain CTCB07)).